The primary structure comprises 98 residues: Integration host factor subunit alpha (98 aa).

Residues 53–69 (DLREKSERPGRNPKTGE) are compositionally biased toward basic and acidic residues. The interval 53 to 73 (DLREKSERPGRNPKTGEDIPI) is disordered.

Belongs to the bacterial histone-like protein family. Heterodimer of an alpha and a beta chain.

Its function is as follows. This protein is one of the two subunits of integration host factor, a specific DNA-binding protein that functions in genetic recombination as well as in transcriptional and translational control. The chain is Integration host factor subunit alpha from Aliivibrio salmonicida (strain LFI1238) (Vibrio salmonicida (strain LFI1238)).